The chain runs to 186 residues: Probable chorismate pyruvate-lyase (186 aa).

3 residues coordinate substrate: R80, L118, and E170.

Belongs to the UbiC family.

The protein localises to the cytoplasm. It carries out the reaction chorismate = 4-hydroxybenzoate + pyruvate. It functions in the pathway cofactor biosynthesis; ubiquinone biosynthesis. Removes the pyruvyl group from chorismate, with concomitant aromatization of the ring, to provide 4-hydroxybenzoate (4HB) for the ubiquinone pathway. The polypeptide is Probable chorismate pyruvate-lyase (Pseudomonas syringae pv. tomato (strain ATCC BAA-871 / DC3000)).